A 150-amino-acid polypeptide reads, in one-letter code: 3-dehydroquinate dehydratase (150 aa).

Catalysis depends on tyrosine 26, which acts as the Proton acceptor. Substrate is bound by residues asparagine 77, histidine 83, and aspartate 90. Histidine 103 functions as the Proton donor in the catalytic mechanism. Substrate contacts are provided by residues 104-105 (LS) and arginine 114.

Belongs to the type-II 3-dehydroquinase family. As to quaternary structure, homododecamer.

The catalysed reaction is 3-dehydroquinate = 3-dehydroshikimate + H2O. It functions in the pathway metabolic intermediate biosynthesis; chorismate biosynthesis; chorismate from D-erythrose 4-phosphate and phosphoenolpyruvate: step 3/7. Catalyzes a trans-dehydration via an enolate intermediate. The polypeptide is 3-dehydroquinate dehydratase (Pectobacterium carotovorum subsp. carotovorum (strain PC1)).